The chain runs to 769 residues: Serine protease HtrA-like (769 aa).

Over residues 1–20 (MDIGKKHVIPKSQYRRKRRE) the composition is skewed to basic residues. Positions 1 to 390 (MDIGKKHVIP…ATSKLNKGRA (390 aa)) are disordered. Basic and acidic residues-rich tracts occupy residues 21–64 (FFHN…ERFK) and 71–108 (LEQRNRDVNENKAEESKSNQDSKSAYNRDHYLTDDVSK). Residues 126–137 (YEQNSEATLSTK) are compositionally biased toward polar residues. Residues 138–186 (STDKVESTEMRKLSSDKNKVGHEEQHVLSKPSEHDKETRIDSESSRTDS) show a composition bias toward basic and acidic residues. Residues 247 to 262 (QQSQNEQTKTYTYGDS) are compositionally biased toward polar residues. 2 stretches are compositionally biased toward basic and acidic residues: residues 264 to 296 (QNDKSNHENDLSHHIPSISDDKDNVMRENHIVD) and 310 to 330 (KTDDDRKLDEKIHVEDKHKQN). Over residues 331–347 (ADSSETVGYQSQSTASH) the composition is skewed to polar residues. Basic and acidic residues predominate over residues 348-364 (RSTEKRNISINDHDKLN). Positions 365–390 (GQKTNTKTSANNNQKKATSKLNKGRA) are enriched in polar residues. The chain crosses the membrane as a helical span at residues 410–430 (LVILMGIIILIVILNAIFNNV). Residues His504, Asp534, and Ser619 each act as charge relay system in the active site. The region spanning 680-733 (IASLNSFERQAVKLPGKVKNGVVVDQVDNNGLADQSGLKKGDVITELDGKLLED) is the PDZ domain.

This sequence belongs to the peptidase S1C family.

It is found in the cell membrane. The chain is Serine protease HtrA-like from Staphylococcus aureus (strain COL).